The following is a 414-amino-acid chain: Transforming growth factor beta-2 proprotein (414 aa).

Residues 1–20 (MHYCVLSAFLLLHLVTVALS) form the signal peptide. N-linked (GlcNAc...) asparagine glycans are attached at residues Asn72, Asn140, and Asn241. Cystine bridges form between Cys309-Cys318, Cys317-Cys380, Cys346-Cys411, and Cys350-Cys413.

The protein belongs to the TGF-beta family. Interacts with the serine proteases, HTRA1 and HTRA3. Interacts with ASPN. Interacts with MFAP5. In terms of assembly, interacts with Transforming growth factor beta-2 (TGF-beta-2) chain; interaction is non-covalent and maintains (TGF-beta-2) in a latent state. Interacts with LRRC32/GARP; leading to regulate activation of TGF-beta-2. Interacts with NREP; the interaction results in a decrease in TGFB2 autoinduction. As to quaternary structure, transforming growth factor beta-2: Homodimer; disulfide-linked. Transforming growth factor beta-2: Interacts with TGF-beta receptors (TGFBR1 and TGFBR2), leading to signal transduction. Post-translationally, the precursor proprotein is cleaved in the Golgi apparatus to form Transforming growth factor beta-2 (TGF-beta-2) and Latency-associated peptide (LAP) chains, which remain non-covalently linked, rendering TGF-beta-2 inactive.

The protein localises to the secreted. The protein resides in the extracellular space. It localises to the extracellular matrix. In terms of biological role, precursor of the Latency-associated peptide (LAP) and Transforming growth factor beta-2 (TGF-beta-2) chains, which constitute the regulatory and active subunit of TGF-beta-2, respectively. Required to maintain the Transforming growth factor beta-2 (TGF-beta-2) chain in a latent state during storage in extracellular matrix. Associates non-covalently with TGF-beta-2 and regulates its activation via interaction with 'milieu molecules', such as LTBP1 and LRRC32/GARP, that control activation of TGF-beta-2. Its function is as follows. Multifunctional protein that regulates various processes such as angiogenesis and heart development. Activation into mature form follows different steps: following cleavage of the proprotein in the Golgi apparatus, Latency-associated peptide (LAP) and Transforming growth factor beta-2 (TGF-beta-2) chains remain non-covalently linked rendering TGF-beta-2 inactive during storage in extracellular matrix. At the same time, LAP chain interacts with 'milieu molecules', such as LTBP1 and LRRC32/GARP, that control activation of TGF-beta-2 and maintain it in a latent state during storage in extracellular milieus. Once activated following release of LAP, TGF-beta-2 acts by binding to TGF-beta receptors (TGFBR1 and TGFBR2), which transduce signal. The polypeptide is Transforming growth factor beta-2 proprotein (TGFB2) (Bos taurus (Bovine)).